Reading from the N-terminus, the 442-residue chain is ATP-dependent RNA helicase SUB2 (442 aa).

The short motif at 59–87 is the Q motif element; it reads TGFRDFLLKGELLRAITDCGFEHPSEVQQ. The Helicase ATP-binding domain occupies 90-265; the sequence is IPTAILNVDV…KKFMRNPLEV (176 aa). Residue 103-110 coordinates ATP; sequence AKSGLGKT. The short motif at 212–215 is the DECD box element; that stretch reads DECD. The Helicase C-terminal domain occupies 293–438; the sequence is KLNELLDSLE…EYPQGGVDSS (146 aa).

It belongs to the DEAD box helicase family. DECD subfamily.

It localises to the nucleus. The catalysed reaction is ATP + H2O = ADP + phosphate + H(+). Its function is as follows. ATP-binding RNA helicase involved in transcription elongation and required for the export of mRNA out of the nucleus. SUB2 also plays a role in pre-mRNA splicing and spliceosome assembly. May be involved in rDNA and telomeric silencing, and maintenance of genome integrity. This Ajellomyces capsulatus (strain NAm1 / WU24) (Darling's disease fungus) protein is ATP-dependent RNA helicase SUB2 (SUB2).